We begin with the raw amino-acid sequence, 336 residues long: tRNA N6-adenosine threonylcarbamoyltransferase (336 aa).

Residues H111 and H115 each contribute to the Fe cation site. Substrate is bound by residues 134 to 138, D167, G180, and N271; that span reads LVSGG. Fe cation is bound at residue D299.

This sequence belongs to the KAE1 / TsaD family. It depends on Fe(2+) as a cofactor.

It is found in the cytoplasm. It catalyses the reaction L-threonylcarbamoyladenylate + adenosine(37) in tRNA = N(6)-L-threonylcarbamoyladenosine(37) in tRNA + AMP + H(+). In terms of biological role, required for the formation of a threonylcarbamoyl group on adenosine at position 37 (t(6)A37) in tRNAs that read codons beginning with adenine. Is involved in the transfer of the threonylcarbamoyl moiety of threonylcarbamoyl-AMP (TC-AMP) to the N6 group of A37, together with TsaE and TsaB. TsaD likely plays a direct catalytic role in this reaction. In Thioalkalivibrio sulfidiphilus (strain HL-EbGR7), this protein is tRNA N6-adenosine threonylcarbamoyltransferase.